A 146-amino-acid polypeptide reads, in one-letter code: Benzoylsuccinyl-CoA thiolase subunit BbsA (146 aa).

Cysteine 42, cysteine 45, cysteine 55, and cysteine 58 together coordinate Zn(2+).

It belongs to the BbsA family. In terms of assembly, heterotetramer composed of two BbsA subunits and two BbsB subunits. Both BbsA and BbsB are essential for enzymatic activity.

The catalysed reaction is (S)-2-benzoylsuccinyl-CoA + CoA = benzoyl-CoA + succinyl-CoA. It participates in xenobiotic degradation; toluene degradation. Component of the BbsAB thiolase complex, which catalyzes the thiolytic cleavage of (S)-2-benzoylsuccinyl-CoA to succinyl-CoA and benzoyl-CoA, the final step of anaerobic toluene metabolism. The BbsA subunit critically contributes to an induced-fit process for productive binding of a CoA substrate into the active site of BbsB. The sequence is that of Benzoylsuccinyl-CoA thiolase subunit BbsA from Geobacter metallireducens (strain ATCC 53774 / DSM 7210 / GS-15).